The chain runs to 86 residues: Exodeoxyribonuclease 7 small subunit (86 aa).

Belongs to the XseB family. In terms of assembly, heterooligomer composed of large and small subunits.

The protein localises to the cytoplasm. The enzyme catalyses Exonucleolytic cleavage in either 5'- to 3'- or 3'- to 5'-direction to yield nucleoside 5'-phosphates.. Functionally, bidirectionally degrades single-stranded DNA into large acid-insoluble oligonucleotides, which are then degraded further into small acid-soluble oligonucleotides. This is Exodeoxyribonuclease 7 small subunit from Xanthomonas oryzae pv. oryzae (strain MAFF 311018).